A 302-amino-acid polypeptide reads, in one-letter code: Sulfate adenylyltransferase subunit 2 (302 aa).

This sequence belongs to the PAPS reductase family. CysD subfamily. Heterodimer composed of CysD, the smaller subunit, and CysN.

The catalysed reaction is sulfate + ATP + H(+) = adenosine 5'-phosphosulfate + diphosphate. It functions in the pathway sulfur metabolism; hydrogen sulfide biosynthesis; sulfite from sulfate: step 1/3. In terms of biological role, with CysN forms the ATP sulfurylase (ATPS) that catalyzes the adenylation of sulfate producing adenosine 5'-phosphosulfate (APS) and diphosphate, the first enzymatic step in sulfur assimilation pathway. APS synthesis involves the formation of a high-energy phosphoric-sulfuric acid anhydride bond driven by GTP hydrolysis by CysN coupled to ATP hydrolysis by CysD. The sequence is that of Sulfate adenylyltransferase subunit 2 from Psychromonas ingrahamii (strain DSM 17664 / CCUG 51855 / 37).